A 245-amino-acid polypeptide reads, in one-letter code: Octanoyltransferase (245 aa).

The BPL/LPL catalytic domain maps to 54–238 (GEATELVWLL…AFENIFGETR (185 aa)). Residues 92–99 (RGGQLTYH), 167–169 (AIG), and 180–182 (GIA) contribute to the substrate site. Residue Cys-198 is the Acyl-thioester intermediate of the active site.

This sequence belongs to the LipB family.

Its subcellular location is the cytoplasm. It carries out the reaction octanoyl-[ACP] + L-lysyl-[protein] = N(6)-octanoyl-L-lysyl-[protein] + holo-[ACP] + H(+). The protein operates within protein modification; protein lipoylation via endogenous pathway; protein N(6)-(lipoyl)lysine from octanoyl-[acyl-carrier-protein]: step 1/2. Functionally, catalyzes the transfer of endogenously produced octanoic acid from octanoyl-acyl-carrier-protein onto the lipoyl domains of lipoate-dependent enzymes. Lipoyl-ACP can also act as a substrate although octanoyl-ACP is likely to be the physiological substrate. This Rhodopseudomonas palustris (strain TIE-1) protein is Octanoyltransferase.